The chain runs to 315 residues: Transcription initiation factor IIB (315 aa).

The segment at 10–41 (NKVCCYAHPESPLIEDYRAGDMICSECGLVVG) adopts a TFIIB-type zinc-finger fold. Cysteine 14, histidine 17, cysteine 33, and cysteine 36 together coordinate Zn(2+). 2 consecutive repeat copies span residues 123–199 (MADR…LTLK) and 217–293 (FCAN…LMYP).

This sequence belongs to the TFIIB family. As to quaternary structure, belongs to the TFIID complex which is composed of TATA binding protein (Tbp) and a number of TBP-associated factors (Tafs). Associates with TFIID-IIA (DA complex) to form TFIID-IIA-IIB (DAB-complex) which is then recognized by polymerase II.

It localises to the nucleus. Functionally, general factor that plays a major role in the activation of eukaryotic genes transcribed by RNA polymerase II. This chain is Transcription initiation factor IIB (TfIIB), found in Drosophila melanogaster (Fruit fly).